A 436-amino-acid polypeptide reads, in one-letter code: GTPase Der (436 aa).

EngA-type G domains are found at residues 4 to 167 (PVIA…PKIE) and 176 to 351 (IRFS…ESHS). GTP-binding positions include 10–17 (GRPNVGKS), 57–61 (DTGGI), 119–122 (NKVD), 182–189 (GRPNVGKS), 229–233 (DTAGM), and 294–297 (NKWD). Residues 352-436 (IRVQTNVLND…PIHIIARARD (85 aa)) enclose the KH-like domain.

Belongs to the TRAFAC class TrmE-Era-EngA-EngB-Septin-like GTPase superfamily. EngA (Der) GTPase family. As to quaternary structure, associates with the 50S ribosomal subunit.

Functionally, GTPase that plays an essential role in the late steps of ribosome biogenesis. In Bacillus mycoides (strain KBAB4) (Bacillus weihenstephanensis), this protein is GTPase Der.